A 190-amino-acid chain; its full sequence is Imidazoleglycerol-phosphate dehydratase (190 aa).

This sequence belongs to the imidazoleglycerol-phosphate dehydratase family.

The protein resides in the cytoplasm. It carries out the reaction D-erythro-1-(imidazol-4-yl)glycerol 3-phosphate = 3-(imidazol-4-yl)-2-oxopropyl phosphate + H2O. The protein operates within amino-acid biosynthesis; L-histidine biosynthesis; L-histidine from 5-phospho-alpha-D-ribose 1-diphosphate: step 6/9. This Methanococcus maripaludis (strain C7 / ATCC BAA-1331) protein is Imidazoleglycerol-phosphate dehydratase.